A 98-amino-acid chain; its full sequence is Integration host factor subunit alpha (98 aa).

Positions 49–71 (FGNFDLRDKNQRPGRNPKTGEDI) are disordered.

This sequence belongs to the bacterial histone-like protein family. In terms of assembly, heterodimer of an alpha and a beta chain.

This protein is one of the two subunits of integration host factor, a specific DNA-binding protein that functions in genetic recombination as well as in transcriptional and translational control. This is Integration host factor subunit alpha from Shewanella sp. (strain MR-4).